The primary structure comprises 279 residues: Energy-coupling factor transporter ATP-binding protein EcfA (279 aa).

In terms of domain architecture, ABC transporter spans 5–240 (IELEKINYKY…GPELIDLGLD (236 aa)). ATP is bound at residue 40–47 (GHNGSGKS).

Belongs to the ABC transporter superfamily. Energy-coupling factor EcfA family. In terms of assembly, forms a stable energy-coupling factor (ECF) transporter complex composed of 2 membrane-embedded substrate-binding proteins (S component), 2 ATP-binding proteins (A component) and 2 transmembrane proteins (T component).

The protein resides in the cell membrane. Functionally, ATP-binding (A) component of a common energy-coupling factor (ECF) ABC-transporter complex. Unlike classic ABC transporters this ECF transporter provides the energy necessary to transport a number of different substrates. In Enterococcus faecium (Streptococcus faecium), this protein is Energy-coupling factor transporter ATP-binding protein EcfA.